The chain runs to 509 residues: Cytochrome P450 monooxygenase CYP512U6 (509 aa).

The helical transmembrane segment at 12-29 (VFACVAVVIAIYAVRWYT) threads the bilayer. Cys-446 contributes to the heme binding site.

Belongs to the cytochrome P450 family. Requires heme as cofactor.

Its subcellular location is the membrane. It carries out the reaction ganoderate DM + reduced [NADPH--hemoprotein reductase] + O2 = hainanate A + oxidized [NADPH--hemoprotein reductase] + H2O + H(+). It catalyses the reaction ganoderate TR + reduced [NADPH--hemoprotein reductase] + O2 = ganoderate Jc + oxidized [NADPH--hemoprotein reductase] + H2O + H(+). It participates in secondary metabolite biosynthesis; terpenoid biosynthesis. Cytochrome P450 monooxygenase that hydroxylates the ganoderic acids DM and TR at the C-23 position to produce hainanic acid A and ganoderic acid Jc, respectively. This is Cytochrome P450 monooxygenase CYP512U6 from Ganoderma lucidum (Ling zhi medicinal fungus).